The sequence spans 242 residues: Myogenic factor 6 (242 aa).

A disordered region spans residues 30–63 (GSPLYPGSDGTLSPCQDQLPPEAGSDSSGEEHVL). Residues 93–144 (DRRKAATLRERRRLKKINEAFEALKRRTVANPNQRLPKVEILRSAISYIERL) form the bHLH domain. Residues 190–210 (ASDHSRALGGSPKAGGSMVES) are disordered.

As to quaternary structure, efficient DNA binding requires dimerization with another bHLH protein. In terms of tissue distribution, skeletal muscle.

The protein localises to the nucleus. In terms of biological role, involved in muscle differentiation (myogenic factor). Induces fibroblasts to differentiate into myoblasts. Probable sequence specific DNA-binding protein. This Gallus gallus (Chicken) protein is Myogenic factor 6 (MYF6).